Reading from the N-terminus, the 462-residue chain is Probable alcohol acetyltransferase crmB (462 aa).

This sequence belongs to the alcohol acetyltransferase FCK4 family.

It functions in the pathway secondary metabolite biosynthesis. In terms of biological role, probable alcohol acetyltransferase; part of the crm gene cluster that mediates the biosynthesis of a yet unidentified copper-responsive metabolite. In contrast to crmA, is not involved in the biosynthesis of fumivalines or fumicicolins. This chain is Probable alcohol acetyltransferase crmB, found in Aspergillus fumigatus (strain ATCC MYA-4609 / CBS 101355 / FGSC A1100 / Af293) (Neosartorya fumigata).